The following is a 606-amino-acid chain: Mitogen-activated protein kinase kinase kinase 7 (606 aa).

The interval Met-1 to Tyr-300 is interaction with MAPK8IP1. Residues Ile-36–Phe-291 form the Protein kinase domain. ATP-binding positions include Val-42–Val-50 and Lys-63. Lys-72 participates in a covalent cross-link: Glycyl lysine isopeptide (Lys-Gly) (interchain with G-Cter in ubiquitin). Catalysis depends on Asp-156, which acts as the Proton acceptor. Residue Lys-158 forms a Glycyl lysine isopeptide (Lys-Gly) (interchain with G-Cter in ubiquitin) linkage. Thr-184 and Thr-187 each carry phosphothreonine; by autocatalysis. The residue at position 192 (Ser-192) is a Phosphoserine; by autocatalysis. A Glycyl lysine isopeptide (Lys-Gly) (interchain with G-Cter in ubiquitin) cross-link involves residue Lys-209. 2 disordered regions span residues Pro-301 to Val-338 and Lys-354 to Asp-391. Positions Asp-306 to Val-338 are enriched in polar residues. Low complexity predominate over residues Ser-361–Ser-375. Ser-367, Ser-389, and Ser-439 each carry phosphoserine. Residues Leu-443 to Gln-452 are compositionally biased toward polar residues. The disordered stretch occupies residues Leu-443–Asp-493. Low complexity predominate over residues Val-453–Arg-463. Ser-455 carries the post-translational modification Phosphoserine. Positions Met-464 to Glu-473 are enriched in polar residues.

It belongs to the protein kinase superfamily. STE Ser/Thr protein kinase family. MAP kinase kinase kinase subfamily. In terms of assembly, can form homodimer. Binds both upstream activators and downstream substrates in multimolecular complexes. Interacts with TAB1/MAP3K7IP1, TAB2/MAP3K7IP2 and TAB3/MAP3K7IP3. Identified in the TRIKA2 complex composed of MAP3K7/TAK1, TAB1/MAP3K7IP1 and TAB2/MAP3K7IP2. Interacts with PPM1L and PPM1B/PP2CB. Interaction with PP2A and PPP6C leads to its repressed activity. Interacts with TRAF6 and TAB1/MAP3K7IP1; during IL-1 signaling. Interacts with TAOK1 and TAOK2; interaction with TAOK2 interferes with MAP3K7 interaction with IKKA, thus preventing NF-kappa-B activation. Interacts with DYNC2I2 (via WD domains). Interacts with CYLD and RBCK1. Interacts with TGFBR1; induces MAP3K7/TAK1 activation by TRAF6. Interacts with MAPK8IP1 and SMAD6. Interacts with isoform 1 of VRK2. Interacts with DAB2; the interaction is induced by TGF-beta stimulation and may mediate TGF-beta stimulated JNK activation. Interacts with TRIM5. Part of a complex containing ITCH, NDFIP1 and MAP3K7. Interacts with IFIT5; the interaction synergizes the recruitment of IKK to MAP3K7 and enhances IKK phosphorylation. Interacts with PLEKHM1 (via N- and C-terminus). Found in a complex with SH3RF1, RAC2, MAP2K7/MKK7, MAPK8IP1/JIP1, MAPK8/JNK1 and MAPK9/JNK2. Interacts with SASH1. Interacts with RIPK1. Mg(2+) serves as cofactor. Association with TAB1/MAP3K7IP1 promotes autophosphorylation at Ser-192 and subsequent activation. Association with TAB2/MAP3K7IP2, itself associated with free unanchored Lys-63 polyubiquitin chain, promotes autophosphorylation and subsequent activation of MAP3K7. Dephosphorylation at Ser-192 by PPM1B/PP2CB and at Thr-187 by PP2A and PPP6C leads to inactivation. In terms of processing, 'Lys-48'-linked polyubiquitination at Lys-72 is induced by TNFalpha, and leads to proteasomal degradation. Undergoes 'Lys-48'-linked polyubiquitination catalyzed by ITCH. 'Lys-63'-linked polyubiquitination at Lys-158 by TRIM8 does not lead to proteasomal degradation but contributes to autophosphorylation and activation. Deubiquitinated by CYLD, a protease that selectively cleaves 'Lys-63'-linked ubiquitin chains. Deubiquitinated by USP19; leading to negative regulation of TNF-alpha- and IL-1beta-triggered NF-kappa-B activation.

The protein localises to the cytoplasm. It localises to the cell membrane. The catalysed reaction is L-seryl-[protein] + ATP = O-phospho-L-seryl-[protein] + ADP + H(+). It carries out the reaction L-threonyl-[protein] + ATP = O-phospho-L-threonyl-[protein] + ADP + H(+). With respect to regulation, activated by pro-inflammatory cytokines and in response to physical and chemical stresses, including osmotic stress, oxidative stress, arsenic and ultraviolet light irradiation. Activated by 'Lys-63'-linked polyubiquitination and by autophosphorylation. Association with TAB1/MAP3K7IP1 and TAB2/MAP3K7IP2 promotes activation through autophosphorylation, whereas PPM1B/PP2CB, PP2A and PPP6C dephosphorylation leads to inactivation. Ceramides are also able to activate MAP3K7/TAK1. In terms of biological role, serine/threonine kinase which acts as an essential component of the MAP kinase signal transduction pathway. Plays an important role in the cascades of cellular responses evoked by changes in the environment. Mediates signal transduction of TRAF6, various cytokines including interleukin-1 (IL-1), transforming growth factor-beta (TGFB), TGFB-related factors like BMP2 and BMP4, toll-like receptors (TLR), tumor necrosis factor receptor CD40 and B-cell receptor (BCR). Once activated, acts as an upstream activator of the MKK/JNK signal transduction cascade and the p38 MAPK signal transduction cascade through the phosphorylation and activation of several MAP kinase kinases like MAP2K1/MEK1, MAP2K3/MKK3, MAP2K6/MKK6 and MAP2K7/MKK7. These MAP2Ks in turn activate p38 MAPKs and c-jun N-terminal kinases (JNKs); both p38 MAPK and JNK pathways control the transcription factors activator protein-1 (AP-1). Independently of MAP2Ks and p38 MAPKs, acts as a key activator of NF-kappa-B by promoting activation of the I-kappa-B-kinase (IKK) core complex. Mechanistically, recruited to polyubiquitin chains of RIPK2 and IKBKG/NEMO via TAB2/MAP3K7IP2 and TAB3/MAP3K7IP3, and catalyzes phosphorylation and activation of IKBKB/IKKB component of the IKK complex, leading to NF-kappa-B activation. In osmotic stress signaling, plays a major role in the activation of MAPK8/JNK1, but not that of NF-kappa-B. Promotes TRIM5 capsid-specific restriction activity. Phosphorylates RIPK1 at 'Ser-321' which positively regulates RIPK1 interaction with RIPK3 to promote necroptosis but negatively regulates RIPK1 kinase activity and its interaction with FADD to mediate apoptosis. Phosphorylates STING1 in response to cGAMP-activation, promoting association between STEEP1 and STING1 and STING1 translocation to COPII vesicles. This chain is Mitogen-activated protein kinase kinase kinase 7 (MAP3K7), found in Pongo abelii (Sumatran orangutan).